The chain runs to 263 residues: Pollen allergen Phl p 1 (263 aa).

An N-terminal signal peptide occupies residues 1–23 (MASSSSVLLVVVLFAVFLGSAYG). The N-linked (GlcNAc...) asparagine glycan is linked to asparagine 32. The Expansin-like EG45 domain occupies 61 to 167 (GGACGYKDVD…RRVKCKYPEG (107 aa)). 3 disulfides stabilise this stretch: cysteine 64–cysteine 92, cysteine 95–cysteine 162, and cysteine 100–cysteine 106. Positions 181–262 (NYLALLVKYV…GWKADTSYES (82 aa)) constitute an Expansin-like CBD domain.

This sequence belongs to the expansin family. Expansin B subfamily. Homodimer.

It localises to the secreted. The polypeptide is Pollen allergen Phl p 1 (PHLPI) (Phleum pratense (Common timothy)).